The chain runs to 365 residues: Tetraacyldisaccharide 4'-kinase (365 aa).

68–75 provides a ligand contact to ATP; that stretch reads VVGGAGKT.

It belongs to the LpxK family.

It carries out the reaction a lipid A disaccharide + ATP = a lipid IVA + ADP + H(+). The protein operates within glycolipid biosynthesis; lipid IV(A) biosynthesis; lipid IV(A) from (3R)-3-hydroxytetradecanoyl-[acyl-carrier-protein] and UDP-N-acetyl-alpha-D-glucosamine: step 6/6. In terms of biological role, transfers the gamma-phosphate of ATP to the 4'-position of a tetraacyldisaccharide 1-phosphate intermediate (termed DS-1-P) to form tetraacyldisaccharide 1,4'-bis-phosphate (lipid IVA). This is Tetraacyldisaccharide 4'-kinase from Chlamydia pneumoniae (Chlamydophila pneumoniae).